Consider the following 291-residue polypeptide: Elongation factor Ts, mitochondrial (291 aa).

This sequence belongs to the EF-Ts family.

It localises to the mitochondrion. In terms of biological role, associates with the EF-Tu.GDP complex and induces the exchange of GDP to GTP. It remains bound to the aminoacyl-tRNA.EF-Tu.GTP complex up to the GTP hydrolysis stage on the ribosome. This chain is Elongation factor Ts, mitochondrial, found in Nematostella vectensis (Starlet sea anemone).